Reading from the N-terminus, the 294-residue chain is Cell division control protein 2 homolog A (294 aa).

Positions 4 to 287 constitute a Protein kinase domain; sequence YEKVEKIGEG…ARNALQHEYF (284 aa). ATP-binding positions include 10–18 and lysine 33; that span reads IGEGTYGVV. A Phosphothreonine modification is found at threonine 14. Residue tyrosine 15 is modified to Phosphotyrosine. Aspartate 127 serves as the catalytic Proton acceptor. Position 161 is a phosphothreonine; by CAK (threonine 161).

The protein belongs to the protein kinase superfamily. CMGC Ser/Thr protein kinase family. CDC2/CDKX subfamily.

It carries out the reaction L-seryl-[protein] + ATP = O-phospho-L-seryl-[protein] + ADP + H(+). The catalysed reaction is L-threonyl-[protein] + ATP = O-phospho-L-threonyl-[protein] + ADP + H(+). It catalyses the reaction [DNA-directed RNA polymerase] + ATP = phospho-[DNA-directed RNA polymerase] + ADP + H(+). With respect to regulation, phosphorylation at Thr-14 or Tyr-15 inactivates the enzyme, while phosphorylation at Thr-161 activates it. Its function is as follows. Plays a key role in the control of the eukaryotic cell cycle. This Antirrhinum majus (Garden snapdragon) protein is Cell division control protein 2 homolog A (CDC2A).